We begin with the raw amino-acid sequence, 166 residues long: MPDATLPACFLGLLALTSACYFQNCPKGGKRAMSDLELRQCLPCGPGGKGRCFGPSICCGDELGCFVGTAEALRCQEENYLPSPCQSGQKPCGSGGRCAAAGICCNDESCVTEPECREGASFLRRARASDRSNATLLDGPSGALLLRLVQLAGAPEPAEPAQPGVY.

The signal sequence occupies residues 1 to 19; the sequence is MPDATLPACFLGLLALTSA. A disulfide bond links Cys-20 and Cys-25. Gly-28 is modified (glycine amide). 7 disulfide bridges follow: Cys-41/Cys-85, Cys-44/Cys-58, Cys-52/Cys-75, Cys-59/Cys-65, Cys-92/Cys-104, Cys-98/Cys-116, and Cys-105/Cys-110. The N-linked (GlcNAc...) asparagine glycan is linked to Asn-133.

Belongs to the vasopressin/oxytocin family. As to quaternary structure, interacts with vasopressin receptors V1bR/AVPR1B (Ki=85 pM), V1aR/AVPR1A (Ki=0.6 nM) and V2R/AVPR2 (Ki=4.9 nM). Interacts with oxytocin receptor (OXTR) (Ki=110 nM). A shorter neurophysin molecule (32-123) is called neurophysin-I and is derived from the complete protein (called neurophysin III) by proteolytic degradation (in vivo or after extraction).

The protein resides in the secreted. In terms of biological role, neurophysin 2 specifically binds vasopressin. Vasopressin has a direct antidiuretic action on the kidney, it also causes vasoconstriction of the peripheral vessels. Acts by binding to vasopressin receptors (V1bR/AVPR1B, V1aR/AVPR1A, and V2R/AVPR2). The protein is Vasopressin-neurophysin 2-copeptin (AVP) of Sus scrofa (Pig).